The following is a 261-amino-acid chain: Transmembrane protein 187 (261 aa).

A run of 6 helical transmembrane segments spans residues 8–28, 43–63, 88–108, 113–133, 140–162, and 190–210; these read AFVH…TGIF, APVA…VNMA, VFAA…WTQW, VLDQ…CLYL, WLFL…HPQG, and SATY…LKLC.

As to expression, ubiquitous.

Its subcellular location is the membrane. The polypeptide is Transmembrane protein 187 (TMEM187) (Homo sapiens (Human)).